We begin with the raw amino-acid sequence, 538 residues long: Putative outer membrane porin BglH (538 aa).

The N-terminal stretch at methionine 1–alanine 25 is a signal peptide. The interval lysine 52–threonine 82 is disordered. The segment covering alanine 62–glutamine 73 has biased composition (polar residues).

Belongs to the porin LamB (TC 1.B.3) family.

The protein resides in the cell outer membrane. May be a sugar porin with a broad carbohydrate specificity. This Shigella flexneri protein is Putative outer membrane porin BglH (bglH).